A 309-amino-acid chain; its full sequence is tRNA-dihydrouridine(16) synthase (309 aa).

Residues 7–9 (PME) and Gln68 each bind FMN. Cys98 acts as the Proton donor in catalysis. FMN is bound by residues Arg137, Asn198, and 220–221 (GC).

It belongs to the Dus family. DusC subfamily. The cofactor is FMN.

The enzyme catalyses 5,6-dihydrouridine(16) in tRNA + NADP(+) = uridine(16) in tRNA + NADPH + H(+). The catalysed reaction is 5,6-dihydrouridine(16) in tRNA + NAD(+) = uridine(16) in tRNA + NADH + H(+). Functionally, catalyzes the synthesis of 5,6-dihydrouridine (D), a modified base found in the D-loop of most tRNAs, via the reduction of the C5-C6 double bond in target uridines. Specifically modifies U16 in tRNAs. The sequence is that of tRNA-dihydrouridine(16) synthase from Azotobacter vinelandii.